The sequence spans 957 residues: Nitrite reductase [NAD(P)H] large subunit (957 aa).

44–79 (YDRVHLTEYFAGRSAESLSLVEGDFFTQHGIELRLS) is an FAD binding site. Residue 193–225 (LREKISELGVGVHTSKATTEIVRNEQGLQLNFR) participates in NAD(+) binding. The [2Fe-2S] cluster site is built by C423, C425, C457, and C460. [4Fe-4S] cluster contacts are provided by C639, C645, C679, and C683. C683 lines the siroheme pocket.

It belongs to the nitrite and sulfite reductase 4Fe-4S domain family. In terms of assembly, homodimer which associates with NirD. The cofactor is siroheme. Requires [2Fe-2S] cluster as cofactor. [4Fe-4S] cluster serves as cofactor. FAD is required as a cofactor.

The enzyme catalyses NH4(+) + 3 NADP(+) + 2 H2O = nitrite + 3 NADPH + 5 H(+). The catalysed reaction is NH4(+) + 3 NAD(+) + 2 H2O = nitrite + 3 NADH + 5 H(+). It functions in the pathway nitrogen metabolism; nitrate reduction (assimilation). In Klebsiella oxytoca, this protein is Nitrite reductase [NAD(P)H] large subunit (nasB).